Reading from the N-terminus, the 294-residue chain is Aquaporin NIP1-2 (294 aa).

Met-1 bears the N-acetylmethionine mark. Helical transmembrane passes span 54–74 (LMAE…AVAV) and 82–102 (VTLP…VYSL). The short motif at 111–113 (NPA) is the NPA 1 element. Helical transmembrane passes span 133-153 (VISQ…LFGL), 177-197 (SFVI…GVAT), and 201-221 (AIGE…VIIA). The short motif at 230-232 (NPG) is the NPA 2 element. A helical transmembrane segment spans residues 248–268 (WIYIVSPIVGAVSGAWVYNMV). The residue at position 283 (Ser-283) is a Phosphoserine.

It belongs to the MIP/aquaporin (TC 1.A.8) family. NIP (TC 1.A.8.12) subfamily. In terms of tissue distribution, expressed in developing seeds.

The protein localises to the membrane. Functionally, water channel probably required to promote glycerol permeability and water transport across cell membranes. In Arabidopsis thaliana (Mouse-ear cress), this protein is Aquaporin NIP1-2 (NIP1-2).